The sequence spans 219 residues: Probable GTP-binding protein EngB (219 aa).

Residues 24 to 207 (VQPEIAFAGR…HELIESWLRP (184 aa)) form the EngB-type G domain. GTP contacts are provided by residues 32-39 (GRSNAGKS), 59-63 (GRTQH), 81-84 (DLPG), 148-151 (TKCD), and 186-188 (FSA). Mg(2+)-binding residues include Ser39 and Thr61.

The protein belongs to the TRAFAC class TrmE-Era-EngA-EngB-Septin-like GTPase superfamily. EngB GTPase family. Mg(2+) is required as a cofactor.

Necessary for normal cell division and for the maintenance of normal septation. This is Probable GTP-binding protein EngB from Burkholderia cenocepacia (strain HI2424).